We begin with the raw amino-acid sequence, 243 residues long: Protein S40-7 (243 aa).

Disordered stretches follow at residues 1–68 and 107–143; these read MNKN…KSGL and SSTASSSSSSGGGASAGSSSSARAIPTAPKPPQERLP. Positions 10–20 are enriched in polar residues; it reads SSPSSLATISD. Positions 22-32 are enriched in acidic residues; that stretch reads ADGELNEDDIF. The segment covering 47 to 67 has biased composition (polar residues); the sequence is PVSSPAKQQTPARQLQRSKSG.

Belongs to the senescence regulator S40 family.

The protein localises to the cytoplasm. The chain is Protein S40-7 from Arabidopsis thaliana (Mouse-ear cress).